A 208-amino-acid chain; its full sequence is uncharacterized protein (208 aa).

This is an uncharacterized protein from Methanocaldococcus jannaschii (strain ATCC 43067 / DSM 2661 / JAL-1 / JCM 10045 / NBRC 100440) (Methanococcus jannaschii).